A 90-amino-acid chain; its full sequence is Small ribosomal subunit protein bS16 (90 aa).

The protein belongs to the bacterial ribosomal protein bS16 family.

The protein is Small ribosomal subunit protein bS16 of Fervidobacterium nodosum (strain ATCC 35602 / DSM 5306 / Rt17-B1).